The following is a 216-amino-acid chain: Uridine kinase (216 aa).

Residue 16–23 (GASASGKS) participates in ATP binding.

It belongs to the uridine kinase family.

The protein localises to the cytoplasm. It carries out the reaction uridine + ATP = UMP + ADP + H(+). The enzyme catalyses cytidine + ATP = CMP + ADP + H(+). It participates in pyrimidine metabolism; CTP biosynthesis via salvage pathway; CTP from cytidine: step 1/3. It functions in the pathway pyrimidine metabolism; UMP biosynthesis via salvage pathway; UMP from uridine: step 1/1. In Pasteurella multocida (strain Pm70), this protein is Uridine kinase.